A 71-amino-acid chain; its full sequence is Protein KleB (71 aa).

Residues 9-28 constitute a DNA-binding region (H-T-H motif); it reads IETCCRRCGKSIRTLSHTII.

The protein is Protein KleB (kleB) of Escherichia coli.